The sequence spans 1077 residues: Histone deacetylase 4 (1077 aa).

Residues 66 to 169 (REQQLQQELL…GKESAVASTE (104 aa)) are a coiled coil. The interval 117–312 (MLAMKHQQEL…NSSSGNVSTE (196 aa)) is interaction with MEF2A. Positions 132-162 (KLERHRQEQELEKQHREQKLQQLKNKEKGKE) are enriched in basic and acidic residues. 3 disordered regions span residues 132 to 167 (KLER…AVAS), 204 to 225 (KTQH…ASYN), and 239 to 327 (PLRK…AETS). Over residues 205 to 224 (TQHSSLDQSSPPQSGVSASY) the composition is skewed to polar residues. Serine 209 carries the post-translational modification Phosphoserine. Serine 245 bears the Phosphoserine; by CaMK4 and SIK1 mark. A compositionally biased stretch (basic and acidic residues) spans 258–273 (KVAERRSSPLLRRKDG). The segment covering 289–310 (SACSSAPGSGPSSPNSSSGNVS) has biased composition (low complexity). Residues 348-353 (PSLPNI) carry the PxLPxI/L motif; mediates interaction with ANKRA2 and 14-3-3 proteins motif. Position 349 is a phosphoserine (serine 349). Serine 466 carries the phosphoserine; by CaMK4 and SIK1 modification. 3 disordered regions span residues 508–530 (SKPS…ELRE), 542–582 (RLPG…RPAT), and 623–646 (RPLS…EPPT). A compositionally biased stretch (basic and acidic residues) spans 515–530 (RQPESHPEETEEELRE). Lysine 557 participates in a covalent cross-link: Glycyl lysine isopeptide (Lys-Gly) (interchain with G-Cter in SUMO). Serine 563, serine 630, and serine 631 each carry phosphoserine. Over residues 627 to 639 (RAQSSPASATFPM) the composition is skewed to polar residues. A histone deacetylase region spans residues 653–1077 (GLVYDTLMLK…EEPMEEEPPL (425 aa)). Positions 665, 667, 673, and 744 each coordinate Zn(2+). Histidine 796 is a catalytic residue. Positions 1044-1077 (EEAETVTAMASLSVGVKPAEKRSEEEPMEEEPPL) match the Nuclear export signal motif. A disordered region spans residues 1052–1077 (MASLSVGVKPAEKRSEEEPMEEEPPL).

Belongs to the histone deacetylase family. HD type 2 subfamily. In terms of assembly, homodimer. Homodimerization via its N-terminal domain. Interacts with HDAC7. Interacts with MEF2A, MEF2C, MEF2D, MORC2 and NR2C1. Interacts with a 14-3-3 chaperone proteins in a phosphorylation dependent manner. Interacts with 14-3-3 protein YWHAB. Interacts with KDM5B and AHRR. Interacts with BTBD14B. Interacts with MYOCD. Interacts (via PxLPxI/L motif) with ANKRA2 (via ankyrin repeats). Interacts with CUL7 (as part of the 3M complex); negatively regulated by ANKRA2. Interacts with EP300 in the presence of TFAP2C. Interacts with HSPA1A and HSPA1B leading to their deacetylation at 'Lys-77'. Interacts with ZBTB7B; the interaction allows the recruitment of HDAC4 on CD8 loci for deacetylation and possible inhibition of CD8 genes expression. Interacts with DHX36. Interacts with SIK3; this interaction leads to HDAC4 retention in the cytoplasm. In terms of processing, phosphorylated by CaMK4 at Ser-245, Ser-466 and Ser-630. Phosphorylation at other residues by CaMK2D is required for the interaction with 14-3-3. Phosphorylation at Ser-349, within the PxLPxI/L motif, impairs the binding of ANKRA2 but generates a high-affinity docking site for 14-3-3. Sumoylation on Lys-557 is promoted by the E3 SUMO-protein ligase RANBP2, and prevented by phosphorylation by CaMK4.

It localises to the nucleus. The protein localises to the cytoplasm. It carries out the reaction N(6)-acetyl-L-lysyl-[histone] + H2O = L-lysyl-[histone] + acetate. Its function is as follows. Responsible for the deacetylation of lysine residues on the N-terminal part of the core histones (H2A, H2B, H3 and H4). Histone deacetylation gives a tag for epigenetic repression and plays an important role in transcriptional regulation, cell cycle progression and developmental events. Histone deacetylases act via the formation of large multiprotein complexes. Involved in muscle maturation via its interaction with the myocyte enhancer factors such as MEF2A, MEF2C and MEF2D. Deacetylates HSPA1A and HSPA1B at 'Lys-77' leading to their preferential binding to co-chaperone STUB1. This is Histone deacetylase 4 (Hdac4) from Rattus norvegicus (Rat).